A 207-amino-acid chain; its full sequence is N-(5'-phosphoribosyl)anthranilate isomerase (207 aa).

The protein belongs to the TrpF family.

The catalysed reaction is N-(5-phospho-beta-D-ribosyl)anthranilate = 1-(2-carboxyphenylamino)-1-deoxy-D-ribulose 5-phosphate. It functions in the pathway amino-acid biosynthesis; L-tryptophan biosynthesis; L-tryptophan from chorismate: step 3/5. In Halorhodospira halophila (strain DSM 244 / SL1) (Ectothiorhodospira halophila (strain DSM 244 / SL1)), this protein is N-(5'-phosphoribosyl)anthranilate isomerase.